A 215-amino-acid polypeptide reads, in one-letter code: 3,4-dihydroxy-2-butanone 4-phosphate synthase (215 aa).

Residues 38–39 (RE), Asp43, 151–155 (RRGHT), and Glu175 each bind D-ribulose 5-phosphate. Glu39 serves as a coordination point for Mg(2+). Mg(2+) is bound at residue His154.

This sequence belongs to the DHBP synthase family. Homodimer. It depends on Mg(2+) as a cofactor. Mn(2+) serves as cofactor.

It catalyses the reaction D-ribulose 5-phosphate = (2S)-2-hydroxy-3-oxobutyl phosphate + formate + H(+). Its pathway is cofactor biosynthesis; riboflavin biosynthesis; 2-hydroxy-3-oxobutyl phosphate from D-ribulose 5-phosphate: step 1/1. Catalyzes the conversion of D-ribulose 5-phosphate to formate and 3,4-dihydroxy-2-butanone 4-phosphate. The chain is 3,4-dihydroxy-2-butanone 4-phosphate synthase from Haemophilus influenzae (strain ATCC 51907 / DSM 11121 / KW20 / Rd).